The chain runs to 2061 residues: Myoferlin (2061 aa).

The region spanning 1–101 (MLRVIVESAS…TGDQSRSLPY (101 aa)) is the C2 1 domain. Topologically, residues 1-2025 (MLRVIVESAS…MKFIVWRRFK (2025 aa)) are cytoplasmic. Positions 123–172 (GYDPPSAPHPNDLSGPSVPGMGGDGEEDEGDEDRLDNAVRGPGPKGPVGT) are disordered. Acidic residues predominate over residues 146–156 (DGEEDEGDEDR). Position 174 is a phosphoserine (Ser-174). C2 domains follow at residues 181–300 (RLTK…RKWL) and 339–474 (DSDD…VEDF). A necessary for interaction with EHD2 region spans residues 186–281 (KNSRRMLSNK…RADCLMGEFK (96 aa)). Positions 323 to 342 (LGTGDEPPPERRDRDNDSDD) are disordered. 5 residues coordinate Ca(2+): Asp-390, Asp-396, Asp-444, Asp-446, and Asp-452. Position 553 is an N6-acetyllysine (Lys-553). Ser-729 carries the post-translational modification Phosphoserine. Residue Lys-884 is modified to N6-acetyllysine. A disordered region spans residues 938 to 967 (ESRYPGGDWKPAEDTYTDANGDKAASPSEL). C2 domains lie at 1123 to 1251 (GANT…LLWH) and 1282 to 1410 (LPPQ…GKED). Asp-1155, Asp-1161, Asp-1217, and Asp-1219 together coordinate Ca(2+). An N6-acetyllysine modification is found at Lys-1507. C2 domains are found at residues 1536–1654 (PAPP…SHCG) and 1772–1920 (GPPG…EKCR). Positions 1569, 1575, 1624, 1626, 1891, 1894, and 1897 each coordinate Ca(2+). At Ser-1915 the chain carries Phosphoserine. The helical transmembrane segment at 2026–2046 (WVIIGLLFLLILLLFVAVLLY) threads the bilayer. Residues 2047 to 2061 (SLPNYLSMKIVKPNV) are Extracellular-facing.

This sequence belongs to the ferlin family. Interacts with DNM2 and KDR. Interacts with EHD1. Interacts with EHD2; the interaction is direct. Interacts with RIPOR2. It depends on Ca(2+) as a cofactor. Expressed in myoblast and endothelial cells (at protein level). Highly expressed in cardiac and skeletal muscles. Also present in lung, and at very low levels in kidney, placenta and brain.

Its subcellular location is the cell membrane. The protein localises to the nucleus membrane. The protein resides in the cytoplasmic vesicle membrane. Its function is as follows. Calcium/phospholipid-binding protein that plays a role in the plasmalemma repair mechanism of endothelial cells that permits rapid resealing of membranes disrupted by mechanical stress. Involved in endocytic recycling. Implicated in VEGF signal transduction by regulating the levels of the receptor KDR. The polypeptide is Myoferlin (MYOF) (Homo sapiens (Human)).